Here is a 541-residue protein sequence, read N- to C-terminus: MAAVNLQASCSSGLASEDDANVGSQIGAAERLERPPRRQQQRNNYGSSNQDQPDAAILAVPNVVMREPCGSRPSRLTGGGGGSGGPPTNEMEEEQGLKYGAQHVIKLFVPVSLCMLVVVATINSISFYNSTDVYLLYTPFHEQSPEPSVKFWSALANSLILMSVVVVMTFLLIVLYKKRCYRIIHGWLILSSFMLLFIFTYLYLEELLRAYNIPMDYPTALLIMWNFGVVGMMSIHWQGPLRLQQGYLIFVAALMALVFIKYLPEWTAWAVLAAISIWDLIAVLSPRGPLRILVETAQERNEQIFPALIYSSTVVYALVNTVTPQQSQATASSSPSSSNSTTTTRATQNSLASPEAAAASGQRTGNSHPRQNQRDDGSVLATEGMPLVTFKSNLRGNAEAAGFTQEWSANLSERVARRQIEVQSTQSGNAQRSNEYRTVTAPDQNHPDGQEERGIKLGLGDFIFYSVLVGKASSYGDWTTTIACFVAILIGLCLTLLLLAIWRKALPALPISITFGLIFCFATSAVVKPFMEDLSAKQVFI.

2 stretches are compositionally biased toward polar residues: residues 1–14 and 43–52; these read MAAVNLQASCSSGL and NNYGSSNQDQ. Disordered regions lie at residues 1–52 and 69–92; these read MAAV…NQDQ and CGSRPSRLTGGGGGSGGPPTNEME. Residues 1-106 are Cytoplasmic-facing; that stretch reads MAAVNLQASC…LKYGAQHVIK (106 aa). The helical transmembrane segment at 107–127 threads the bilayer; that stretch reads LFVPVSLCMLVVVATINSISF. At 128–154 the chain is on the lumenal side; the sequence is YNSTDVYLLYTPFHEQSPEPSVKFWSA. Asparagine 129 carries N-linked (GlcNAc...) asparagine glycosylation. A helical transmembrane segment spans residues 155–175; the sequence is LANSLILMSVVVVMTFLLIVL. Topologically, residues 176–182 are cytoplasmic; the sequence is YKKRCYR. Residues 183-203 form a helical membrane-spanning segment; it reads IIHGWLILSSFMLLFIFTYLY. The Lumenal portion of the chain corresponds to 204–216; sequence LEELLRAYNIPMD. The chain crosses the membrane as a helical span at residues 217 to 237; the sequence is YPTALLIMWNFGVVGMMSIHW. The Cytoplasmic portion of the chain corresponds to 238 to 242; it reads QGPLR. The chain crosses the membrane as a helical span at residues 243-263; that stretch reads LQQGYLIFVAALMALVFIKYL. The Lumenal portion of the chain corresponds to 264-265; that stretch reads PE. A helical membrane pass occupies residues 266–286; sequence WTAWAVLAAISIWDLIAVLSP. The active site involves aspartate 279. Residues 287–453 are Cytoplasmic-facing; sequence RGPLRILVET…QNHPDGQEER (167 aa). Residues 320–481 form an interaction with Mettl2 region; the sequence is NTVTPQQSQA…ASSYGDWTTT (162 aa). Residues 327-350 show a composition bias toward low complexity; sequence SQATASSSPSSSNSTTTTRATQNS. Disordered stretches follow at residues 327-379 and 421-449; these read SQAT…DGSV and EVQSTQSGNAQRSNEYRTVTAPDQNHPDG. Composition is skewed to polar residues over residues 361–370 and 421–443; these read GQRTGNSHPR and EVQSTQSGNAQRSNEYRTVTAPD. Residues 454 to 474 traverse the membrane as a helical segment; it reads GIKLGLGDFIFYSVLVGKASS. The active site involves aspartate 461. Topologically, residues 475 to 481 are lumenal; the sequence is YGDWTTT. Residues 482 to 502 form a helical membrane-spanning segment; the sequence is IACFVAILIGLCLTLLLLAIW. Residues 503–506 lie on the Cytoplasmic side of the membrane; sequence RKAL. The PAL signature appears at 507–509; sequence PAL. Positions 507–527 form an intramembrane region, helical; sequence PALPISITFGLIFCFATSAVV. Topologically, residues 528–541 are cytoplasmic; that stretch reads KPFMEDLSAKQVFI.

This sequence belongs to the peptidase A22A family. In terms of assembly, homodimer. Component of the gamma-secretase complex, a complex composed of a presenilin (Psn) homodimer, nicastrin (Nct), Aph-1 and Pen-2. Interacts with Mettl2. Isoform 2 shows a better interaction with Mettl2 than isoform 1. In terms of processing, cleaved. The cleavage, which probably takes place between the 6th and the 7th transmembrane regions, may be required for activation of the gamma-secretase activity. In terms of tissue distribution, maternally expressed in nurse and follicle cells. In early embryos, expressed in all or most cells and later increases in CNS and epidermal tissues. In larvae, expression is seen in all imaginal disks, brain and optic lobes. In pupae, expression is seen in eye disk and brain.

Its subcellular location is the endoplasmic reticulum membrane. It localises to the golgi apparatus membrane. Its function is as follows. Probable catalytic subunit of the gamma-secretase complex, an endoprotease complex that catalyzes the intramembrane cleavage of integral membrane proteins such as Notch receptor. Required for S3 cleavage of Notch, which releases activated Notch protein from the cell membrane. Involved in the patterning of the optic lobes. In Drosophila melanogaster (Fruit fly), this protein is Presenilin homolog (Psn).